The following is a 293-amino-acid chain: MTSALHQSSIKSLPLLGRGKVRDMYAVGDDKLLIVASDRISAFDVILDDPIPGKGQVLTELTEFWLNKLAHILPNHSTGVRPEDVVAPDELDQVRGRAVVVKRLKPILVEAVARGYLIGSGWKDYQATGAVCGIALPAGLQQASKLPQPIFTPAAKAEFGMHDENVDFAHVVREVGQEMAERIRDVTLRLYTEAAQFAATKGIIIADTKFEFGLDDDGTLYLMDEVLTPDSSRFWPADGYRVGISPPSFDKQFVRDWLETQDWDKTPPAPRLPQEVLQKTAAKYREALDRLVA.

It belongs to the SAICAR synthetase family.

It catalyses the reaction 5-amino-1-(5-phospho-D-ribosyl)imidazole-4-carboxylate + L-aspartate + ATP = (2S)-2-[5-amino-1-(5-phospho-beta-D-ribosyl)imidazole-4-carboxamido]succinate + ADP + phosphate + 2 H(+). Its pathway is purine metabolism; IMP biosynthesis via de novo pathway; 5-amino-1-(5-phospho-D-ribosyl)imidazole-4-carboxamide from 5-amino-1-(5-phospho-D-ribosyl)imidazole-4-carboxylate: step 1/2. This Bordetella petrii (strain ATCC BAA-461 / DSM 12804 / CCUG 43448) protein is Phosphoribosylaminoimidazole-succinocarboxamide synthase.